Here is a 715-residue protein sequence, read N- to C-terminus: MNSSSSHRNILVTSALPYANGPIHLGHVLEGIQTDIWVRFQKAIGNECYFFCADDTHGTPVMLAARKEGITPEQLIERVGQEHYRDLTSFGIEYDHYDSTHSKANQEISKDIYLKLKSKGHISRRSIEQSYCETDKMFLPDRFIKGTCPNCKSKDQYGDNCEVCGATYSPKDLIDSHCSLCGTSPVVKNSDHIFFKLGDFHKKDEKSTSLETINPSHLKTDFDLQSWIETSGVVSESEGVKKKLKEWFDAGLQDWDISRDGPYFGFEIPDETNKYFYVWLDAPIGYMASSKNFFEKNFPNEPNKFDSFWKNKNSEIVHFIGKDILYFHTLFWPAMLEGSDYRAPSKVHVHGFIGVNGEKMSKSRGTFIKAETFVKYLDPEHLRFYLASKLGPGMDDIDLSFEDFINKVNSDLVGNLINSVSRVSTTILDALDRTLGVVSKEGLALIEEILYQTVKFGPGEDSIQNIIKYAYDQRNYAKVLREITRLGDRVNRYVNDNAPWKLIKENPEKAREVVTVTLNASRFLAIYLYPVVPKISEQIYKLLNLQDSPSFKDLDKNRILENIKVLPYEMISKRVDEKAIKAMLEENKQSEHSKKVETSENPVPEERLEISIDDLSKVELRVGQIVEAGPVDGADKLVNVKVDLGELGIKNVFAGIKVAYQPENLKGLKVVVVANLKPRKMKFGISEAMLLASGEGESLSLFIPHKDAKPGDRLK.

Residues 17 to 27 carry the 'HIGH' region motif; sequence PYANGPIHLGH. The Zn(2+) site is built by C148, C151, C161, and C164. Residues 359–363 carry the 'KMSKS' region motif; sequence KMSKS. K362 contributes to the ATP binding site. The 102-residue stretch at 614-715 folds into the tRNA-binding domain; it reads DLSKVELRVG…KDAKPGDRLK (102 aa).

This sequence belongs to the class-I aminoacyl-tRNA synthetase family. MetG type 1 subfamily. Homodimer. The cofactor is Zn(2+).

The protein resides in the cytoplasm. The catalysed reaction is tRNA(Met) + L-methionine + ATP = L-methionyl-tRNA(Met) + AMP + diphosphate. Its function is as follows. Is required not only for elongation of protein synthesis but also for the initiation of all mRNA translation through initiator tRNA(fMet) aminoacylation. This is Methionine--tRNA ligase from Leptospira interrogans serogroup Icterohaemorrhagiae serovar Lai (strain 56601).